The following is a 164-amino-acid chain: Serine/arginine-rich splicing factor 3 (164 aa).

Methionine 1 is modified (N-acetylmethionine). Residues 1–90 (MHRDSCPLDC…SNGEKRSRNR (90 aa)) form a sufficient for interaction with NXF1 and SRSP region. Serine 5 carries the post-translational modification Phosphoserine. The RRM domain maps to 10-83 (CKVYVGNLGN…CRVRVELSNG (74 aa)). Residue lysine 23 is modified to N6-acetyllysine. The segment at 81–164 (SNGEKRSRNR…RSRSRSNERK (84 aa)) is disordered. Positions 107 to 128 (RSPPPRRRSPRRRSFSRSRSRS) are enriched in basic residues. The B-1 repeat unit spans residues 119-133 (RSFSRSRSRSLSRDR). The 2 X approximate repeats, basic stretch occupies residues 119 to 164 (RSFSRSRSRSLSRDRRRERSLSRERNHKPSRSFSRSRSRSRSNERK). The segment covering 129–142 (LSRDRRRERSLSRE) has biased composition (basic and acidic residues). Residues 143–158 (RNHKPSRSFSRSRSRS) show a composition bias toward basic residues. Residues 149 to 164 (RSFSRSRSRSRSNERK) form a B-2 repeat.

This sequence belongs to the splicing factor SR family. Interacts with CPSF6. Interacts with RBMY1A1. Interacts with SREK1/SFRS12. Interacts with NXF1. Interacts with YTHDC1, leading to recruitment to RNA elements adjacent to m6A sites. Interacts with SRSP; increases SRSF3 binding to specific exons. In terms of processing, phosphorylated by CLK1, CLK2, CLK3 and CLK4. Extensively phosphorylated on serine residues in the RS domain.

It is found in the nucleus. Its subcellular location is the nucleus speckle. The protein localises to the cytoplasm. Splicing factor, which binds the consensus motif 5'-C[ACU][AU]C[ACU][AC]C-3' within pre-mRNA and promotes specific exons inclusion during alternative splicing. Interaction with YTHDC1, a RNA-binding protein that recognizes and binds N6-methyladenosine (m6A)-containing RNAs, promotes recruitment of SRSF3 to its mRNA-binding elements adjacent to m6A sites within exons. Also functions as an adapter involved in mRNA nuclear export. Binds mRNA which is thought to be transferred to the NXF1-NXT1 heterodimer for export (TAP/NXF1 pathway); enhances NXF1-NXT1 RNA-binding activity. Involved in nuclear export of m6A-containing mRNAs via interaction with YTHDC1: interaction with YTHDC1 facilitates m6A-containing mRNA-binding to both SRSF3 and NXF1, promoting mRNA nuclear export. The sequence is that of Serine/arginine-rich splicing factor 3 (SRSF3) from Bos taurus (Bovine).